A 604-amino-acid chain; its full sequence is Glucoamylase 1 (604 aa).

Residues 1–25 (MQLFNLPLKVSFFLVLSYFSLLVSA) form the signal peptide. Residues 26 to 115 (ASIPSSASVQ…EFYIKYEVSG (90 aa)) form an adsorption to raw starch region. One can recognise a CBM21 domain in the interval 26 to 130 (ASIPSSASVQ…NNNSANYQVS (105 aa)). Positions 116-604 (KTYYDNNNSA…SYAKAGAPAA (489 aa)) are starch degradation. Asn-122 carries an N-linked (GlcNAc...) asparagine glycan. Residues 127-164 (YQVSTSKPTTTTATATTTTAPSTSTTTPPSRSEPATFP) form a disordered region. Residues 130–162 (STSKPTTTTATATTTTAPSTSTTTPPSRSEPAT) are compositionally biased toward low complexity. Asn-167, Asn-230, and Asn-236 each carry an N-linked (GlcNAc...) asparagine glycan. Trp-279 contacts substrate. The active-site Proton acceptor is Asp-336. The active-site Proton donor is the Glu-339. Asn-564 carries N-linked (GlcNAc...) asparagine glycosylation.

Belongs to the glycosyl hydrolase 15 family.

The enzyme catalyses Hydrolysis of terminal (1-&gt;4)-linked alpha-D-glucose residues successively from non-reducing ends of the chains with release of beta-D-glucose.. The protein is Glucoamylase 1 of Rhizopus oryzae (Mucormycosis agent).